Reading from the N-terminus, the 248-residue chain is Ribonuclease 3 (248 aa).

An RNase III domain is found at leucine 15 to glycine 142. Glutamate 55 lines the Mg(2+) pocket. Aspartate 59 is an active-site residue. Positions 128 and 131 each coordinate Mg(2+). Residue glutamate 131 is part of the active site. The 72-residue stretch at aspartate 169 to threonine 240 folds into the DRBM domain.

It belongs to the ribonuclease III family. As to quaternary structure, homodimer. It depends on Mg(2+) as a cofactor.

The protein localises to the cytoplasm. It carries out the reaction Endonucleolytic cleavage to 5'-phosphomonoester.. Digests double-stranded RNA. Involved in the processing of primary rRNA transcript to yield the immediate precursors to the large and small rRNAs (23S and 16S). Processes some mRNAs, and tRNAs when they are encoded in the rRNA operon. Processes pre-crRNA and tracrRNA of type II CRISPR loci if present in the organism. The chain is Ribonuclease 3 from Spiroplasma citri.